The following is a 106-amino-acid chain: 3-phenylpropionate/cinnamic acid dioxygenase ferredoxin subunit (106 aa).

The region spanning I4–I99 is the Rieske domain. The [2Fe-2S] cluster site is built by C42, H44, C62, and H65.

This sequence belongs to the bacterial ring-hydroxylating dioxygenase ferredoxin component family. In terms of assembly, this dioxygenase system consists of four proteins: the two subunits of the hydroxylase component (HcaE and HcaF), a ferredoxin (HcaC) and a ferredoxin reductase (HcaD). Requires [2Fe-2S] cluster as cofactor.

The protein operates within aromatic compound metabolism; 3-phenylpropanoate degradation. Functionally, part of the multicomponent 3-phenylpropionate dioxygenase, that converts 3-phenylpropionic acid (PP) and cinnamic acid (CI) into 3-phenylpropionate-dihydrodiol (PP-dihydrodiol) and cinnamic acid-dihydrodiol (CI-dihydrodiol), respectively. This protein seems to be a 2Fe-2S ferredoxin. The chain is 3-phenylpropionate/cinnamic acid dioxygenase ferredoxin subunit from Shigella boydii serotype 4 (strain Sb227).